A 371-amino-acid chain; its full sequence is Barbiturase 1 (371 aa).

Positions 1-103 are RU A; it reads MPDAIEVRKV…TIFATVPPED (103 aa). Substrate contacts are provided by residues arginine 53 and 82 to 83; that span reads SG. Residues 115 to 250 form an RU B region; that stretch reads RLTVGFAMSE…AQVVVVGNAP (136 aa). Lysine 165 is an active-site residue. Residues asparagine 197 and 233-234 contribute to the substrate site; that span reads SS. The active-site Nucleophile is the serine 233. Residues 256-371 are RU C; the sequence is YRIGHSVMKD…GPVAAIVDLG (116 aa). Mg(2+) is bound at residue glutamate 304. Residues lysine 331 and 350–351 each bind substrate; that span reads SV. Positions 353, 356, 357, 358, and 361 each coordinate Mg(2+).

This sequence belongs to the cyclic amide hydrolase (CyAH) family. As to quaternary structure, homotetramer.

It catalyses the reaction barbiturate + H2O = 3-oxo-3-ureidopropanoate. It participates in pyrimidine metabolism; uracil degradation via oxidative pathway; malonate and urea from uracil: step 2/3. With respect to regulation, inhibited by cyanuric acid. Responsible for the hydrolysis of barbituric acid (2,4,6-trihydroxy-1,3-pyrimidine), an intermediate in the oxidative catabolism of pyrimidines. Catalyzes the hydrolytic opening of the pyrimidine ring of barbituric acid to yield ureidomalonic acid. This chain is Barbiturase 1, found in Nocardioides sp. (strain ATCC BAA-499 / JS614).